A 357-amino-acid polypeptide reads, in one-letter code: MESVEKTTNRSEQKCRKFLKSLIRKQPQDLLLVIGTGVSAAVAPGIRALCSWRSCIEAVIEAAEQLEVLHPGDVAEFRRKVMKDRDLLVVAHDLIRKMSPRTGDTKPNFFQDCLMEVFDSLEQHIQNPVVLRSILSLMDRGTMVLTTNYDNLLEIFGQQQSKPMESLDLKDKTKVLQWARGHIKYGVLHIHGLYTDPCGMVLDPSGYKDVTQDPEVMEVLQNLYRTKSFLFVGCGETLRDQIFQALFLYSVPNKVDLEHYMVVLKENEDHFFKHQADMLLHGIKVVSYGDCFDLFPGYVQDLATQICKQRSPDAERVDSTTLLGNACQDCAKRKLEENGIEVTKKVRQSDTDDAGGS.

Met1 carries the post-translational modification N-acetylmethionine. A helical membrane pass occupies residues 30–46 (LLLVIGTGVSAAVAPGI). Phosphoserine is present on Ser311.

It belongs to the FAM118 family.

It is found in the membrane. The sequence is that of Protein FAM118A (Fam118a) from Mus musculus (Mouse).